The primary structure comprises 418 residues: D-inositol 3-phosphate glycosyltransferase 1 (418 aa).

UDP-N-acetyl-alpha-D-glucosamine contacts are provided by residues 24-25 and G32; that span reads QP. Residues 29-34, K87, H115, S139, and Q159 contribute to the 1D-myo-inositol 3-phosphate site; that span reads DAGGLN. Residues R233 and K238 each contribute to the UDP-N-acetyl-alpha-D-glucosamine site. Mg(2+) contacts are provided by Y308, R309, and A311. UDP-N-acetyl-alpha-D-glucosamine contacts are provided by E321 and E329. Residue T335 participates in Mg(2+) binding.

It belongs to the glycosyltransferase group 1 family. MshA subfamily. In terms of assembly, homodimer.

The catalysed reaction is 1D-myo-inositol 3-phosphate + UDP-N-acetyl-alpha-D-glucosamine = 1D-myo-inositol 2-acetamido-2-deoxy-alpha-D-glucopyranoside 3-phosphate + UDP + H(+). In terms of biological role, catalyzes the transfer of a N-acetyl-glucosamine moiety to 1D-myo-inositol 3-phosphate to produce 1D-myo-inositol 2-acetamido-2-deoxy-glucopyranoside 3-phosphate in the mycothiol biosynthesis pathway. The sequence is that of D-inositol 3-phosphate glycosyltransferase 1 from Catenulispora acidiphila (strain DSM 44928 / JCM 14897 / NBRC 102108 / NRRL B-24433 / ID139908).